A 122-amino-acid chain; its full sequence is Large ribosomal subunit protein uL14 (122 aa).

The protein belongs to the universal ribosomal protein uL14 family. Part of the 50S ribosomal subunit. Forms a cluster with proteins L3 and L19. In the 70S ribosome, L14 and L19 interact and together make contacts with the 16S rRNA in bridges B5 and B8.

Functionally, binds to 23S rRNA. Forms part of two intersubunit bridges in the 70S ribosome. This chain is Large ribosomal subunit protein uL14, found in Latilactobacillus sakei subsp. sakei (strain 23K) (Lactobacillus sakei subsp. sakei).